Reading from the N-terminus, the 285-residue chain is Bifunctional protein FolD (285 aa).

NADP(+) contacts are provided by residues 165–167 and Ser-190; that span reads GRS.

It belongs to the tetrahydrofolate dehydrogenase/cyclohydrolase family. Homodimer.

It catalyses the reaction (6R)-5,10-methylene-5,6,7,8-tetrahydrofolate + NADP(+) = (6R)-5,10-methenyltetrahydrofolate + NADPH. The catalysed reaction is (6R)-5,10-methenyltetrahydrofolate + H2O = (6R)-10-formyltetrahydrofolate + H(+). It functions in the pathway one-carbon metabolism; tetrahydrofolate interconversion. In terms of biological role, catalyzes the oxidation of 5,10-methylenetetrahydrofolate to 5,10-methenyltetrahydrofolate and then the hydrolysis of 5,10-methenyltetrahydrofolate to 10-formyltetrahydrofolate. This Burkholderia pseudomallei (strain 1106a) protein is Bifunctional protein FolD.